The sequence spans 703 residues: MGFNIERVDKPFVVKSPYQPSGDQPKAIEELATRIENGENDVVLMGATGTGKTATTAWLIERLQRPTLIIEPNKTLAAQLCAEFRELMPDNAVSYFVSYYDYYQPEAYIPQTDTYIEKDSNINDDVERLRHQATANLLTRRDCVVVATVSCIYGLGTPEEYAGRMLFLKEGQQINRDDLLRRFVAMQYKRNDIAFTRGTFRVRGDTVEIIPVYEELAIRIEFFGDEIDRISTLHPLTGDVIAHEPQVHIFPASHYVAGPERMERALKTIREELDGRLSELRKQGKELEAQRLDMRTTYDLEMLTQVGVCSGVENYSRHLDGRAAGTPPHTLLDFFPDDFLLVIDESHVTVPQIGAMYEGDASRKRTLVEHGFRLPSAMDNRPLKWPEFLQRVGQTVYLSATPGDYELGLSDGVVEQIIRPTGLLDPKIDVRPVKGQIDDLLAEIKARVARNERALVTTLTKKMAEDLTDYLLERGIKVEYLHSDVDTLRRVELLRMLREGKIDVIVGINLLREGLDLPEVSLVAILDADKEGFLRSYRSLIQTIGRAARNVSGVVIMYADETTEAMRQAIDETDRRRAKQIAYNQEHGIDPKPLIKKISDVNDMLAKEDVDTQTLLEGGYRNAGKAGNTHLGVPVLDPNEADKRHEEILKAGLPAQDLADLIRQLSEQMHTAAEQLQFELAARLRDEIRDLKKELRQMTEAGQ.

The region spanning 33 to 190 (TRIENGENDV…RRFVAMQYKR (158 aa)) is the Helicase ATP-binding domain. Position 46–53 (46–53 (GATGTGKT)) interacts with ATP. A Beta-hairpin motif is present at residues 99 to 122 (YYDYYQPEAYIPQTDTYIEKDSNI). Residues 436-589 (QIDDLLAEIK…QIAYNQEHGI (154 aa)) form the Helicase C-terminal domain. Residues 659 to 694 (ADLIRQLSEQMHTAAEQLQFELAARLRDEIRDLKKE) enclose the UVR domain.

The protein belongs to the UvrB family. In terms of assembly, forms a heterotetramer with UvrA during the search for lesions. Interacts with UvrC in an incision complex.

The protein localises to the cytoplasm. The UvrABC repair system catalyzes the recognition and processing of DNA lesions. A damage recognition complex composed of 2 UvrA and 2 UvrB subunits scans DNA for abnormalities. Upon binding of the UvrA(2)B(2) complex to a putative damaged site, the DNA wraps around one UvrB monomer. DNA wrap is dependent on ATP binding by UvrB and probably causes local melting of the DNA helix, facilitating insertion of UvrB beta-hairpin between the DNA strands. Then UvrB probes one DNA strand for the presence of a lesion. If a lesion is found the UvrA subunits dissociate and the UvrB-DNA preincision complex is formed. This complex is subsequently bound by UvrC and the second UvrB is released. If no lesion is found, the DNA wraps around the other UvrB subunit that will check the other stand for damage. The protein is UvrABC system protein B of Bifidobacterium longum subsp. infantis (strain ATCC 15697 / DSM 20088 / JCM 1222 / NCTC 11817 / S12).